The primary structure comprises 68 residues: Small integral membrane protein 10-like protein 3 (68 aa).

Expressed specifically in salivary glands (at protein level).

The polypeptide is Small integral membrane protein 10-like protein 3 (Mus musculus (Mouse)).